The sequence spans 128 residues: MFYSIVAIFVGAGLGALLRWFLSLALNAFFPAVPLGTLASNLIGGYVIGVAAVVFTVRVGLPPEWRLFVITGFLGGLTTFSTYSVEVMTHALEGEFGWALAVAALHLTGSFALTALGMWTARAWLAAA.

4 consecutive transmembrane segments (helical) span residues 5 to 25 (IVAI…LSLA), 35 to 55 (LGTL…AVVF), 67 to 87 (LFVI…SVEV), and 96 to 116 (FGWA…LTAL). Residues Gly75 and Thr78 each coordinate Na(+).

It belongs to the fluoride channel Fluc/FEX (TC 1.A.43) family.

It is found in the cell inner membrane. It carries out the reaction fluoride(in) = fluoride(out). Its activity is regulated as follows. Na(+) is not transported, but it plays an essential structural role and its presence is essential for fluoride channel function. Functionally, fluoride-specific ion channel. Important for reducing fluoride concentration in the cell, thus reducing its toxicity. The protein is Fluoride-specific ion channel FluC of Burkholderia cenocepacia (strain HI2424).